The primary structure comprises 699 residues: Elongation factor G 1 (699 aa).

The 283-residue stretch at 8 to 290 folds into the tr-type G domain; sequence ERYRNIGICA…AVIEYLPSPI (283 aa). Residues 17–24, 88–92, and 142–145 each bind GTP; these read AHVDAGKT, DTPGH, and NKMD.

Belongs to the TRAFAC class translation factor GTPase superfamily. Classic translation factor GTPase family. EF-G/EF-2 subfamily.

It is found in the cytoplasm. In terms of biological role, catalyzes the GTP-dependent ribosomal translocation step during translation elongation. During this step, the ribosome changes from the pre-translocational (PRE) to the post-translocational (POST) state as the newly formed A-site-bound peptidyl-tRNA and P-site-bound deacylated tRNA move to the P and E sites, respectively. Catalyzes the coordinated movement of the two tRNA molecules, the mRNA and conformational changes in the ribosome. The polypeptide is Elongation factor G 1 (Vibrio vulnificus (strain YJ016)).